A 739-amino-acid polypeptide reads, in one-letter code: UPF0313 protein YgiQ (739 aa).

Positions 372 to 650 constitute a Radical SAM core domain; it reads AYEMIRFSVN…KALLRYHDPA (279 aa). Residues cysteine 386, cysteine 390, and cysteine 393 each coordinate [4Fe-4S] cluster. The segment at 686 to 739 is disordered; that stretch reads EARRQNRNTRPALTKHTPMATQCQTPATAKKASSTQSRPVNAGAKKRPKAAVGR. Positions 704–724 are enriched in polar residues; the sequence is MATQCQTPATAKKASSTQSRP. A compositionally biased stretch (basic residues) spans 729 to 739; it reads AKKRPKAAVGR.

Belongs to the UPF0313 family. [4Fe-4S] cluster is required as a cofactor.

This Escherichia coli O157:H7 protein is UPF0313 protein YgiQ.